We begin with the raw amino-acid sequence, 106 residues long: uncharacterized protein (106 aa).

This is an uncharacterized protein from Escherichia coli (strain K12).